The primary structure comprises 240 residues: Peptidyl-tRNA hydrolase (240 aa).

Tyrosine 14 lines the tRNA pocket. Histidine 19 serves as the catalytic Proton acceptor. Tyrosine 64, asparagine 66, and asparagine 112 together coordinate tRNA. Over residues lysine 190–proline 204 the composition is skewed to basic and acidic residues. The disordered stretch occupies residues lysine 190 to glutamate 240. Over residues histidine 209 to proline 219 the composition is skewed to polar residues.

This sequence belongs to the PTH family. Monomer.

It is found in the cytoplasm. The catalysed reaction is an N-acyl-L-alpha-aminoacyl-tRNA + H2O = an N-acyl-L-amino acid + a tRNA + H(+). Functionally, hydrolyzes ribosome-free peptidyl-tRNAs (with 1 or more amino acids incorporated), which drop off the ribosome during protein synthesis, or as a result of ribosome stalling. In terms of biological role, catalyzes the release of premature peptidyl moieties from peptidyl-tRNA molecules trapped in stalled 50S ribosomal subunits, and thus maintains levels of free tRNAs and 50S ribosomes. The protein is Peptidyl-tRNA hydrolase of Rhizobium etli (strain ATCC 51251 / DSM 11541 / JCM 21823 / NBRC 15573 / CFN 42).